Consider the following 476-residue polypeptide: Stromelysin-2 (476 aa).

A signal peptide spans Met1–Ala17. Positions Tyr18–Gly99 are cleaved as a propeptide — activation peptide. A Cysteine switch motif is present at residues Pro90–Val97. Residues Cys92, His168, Asp170, His183, His196, and His218 each contribute to the Zn(2+) site. The active site involves Glu219. Zn(2+) is bound by residues His222 and His228. Hemopexin repeat units follow at residues Pro286–Leu335, Pro336–Pro382, Val384–Ile432, and Glu433–Cys476. The cysteines at positions 289 and 476 are disulfide-linked.

Belongs to the peptidase M10A family. Zn(2+) serves as cofactor. It depends on Ca(2+) as a cofactor.

It localises to the secreted. The protein resides in the extracellular space. Its subcellular location is the extracellular matrix. The catalysed reaction is Similar to stromelysin 1, but action on collagen types III, IV and V is weak.. Can degrade fibronectin, gelatins of type I, III, IV, and V; weakly collagens III, IV, and V. Activates procollagenase. The sequence is that of Stromelysin-2 (Mmp10) from Rattus norvegicus (Rat).